Consider the following 325-residue polypeptide: Leucine carboxyl methyltransferase 1 (325 aa).

Residues arginine 79, glycine 104, aspartate 127, 174–175, and glutamate 200 contribute to the S-adenosyl-L-methionine site; that span reads DL.

Belongs to the methyltransferase superfamily. LCMT family.

The catalysed reaction is [phosphatase 2A protein]-C-terminal L-leucine + S-adenosyl-L-methionine = [phosphatase 2A protein]-C-terminal L-leucine methyl ester + S-adenosyl-L-homocysteine. Methylates the carboxyl group of the C-terminal leucine residue of protein phosphatase 2A catalytic subunits to form alpha-leucine ester residues. The sequence is that of Leucine carboxyl methyltransferase 1 (PPM1) from Eremothecium gossypii (strain ATCC 10895 / CBS 109.51 / FGSC 9923 / NRRL Y-1056) (Yeast).